Reading from the N-terminus, the 977-residue chain is Serine/threonine-protein kinase/endoribonuclease IRE1 (977 aa).

The N-terminal stretch at 1–18 is a signal peptide; the sequence is MPARRLLLLLTLLLPGLG. Residues 19–443 are Lumenal-facing; sequence IFGSTSTVTL…EAPVDSMLKD (425 aa). The N-linked (GlcNAc...) asparagine glycan is linked to N176. Over residues 410 to 419 the composition is skewed to polar residues; sequence TSENAPTTVS. The disordered stretch occupies residues 410 to 434; the sequence is TSENAPTTVSRDVEEKPAHAPARPE. Residues 444-464 form a helical membrane-spanning segment; sequence MATIILSTFLLIGWVAFIITY. The Cytoplasmic portion of the chain corresponds to 465-977; the sequence is PLSMHQQQQL…PQPPVTPDAL (513 aa). Residues 491–559 form a disordered region; sequence QQQQQLPFHP…PSLEQDDGDE (69 aa). Low complexity predominate over residues 513–552; the sequence is TSGPYSESSGTSSPSTSPRASNHSLCSGSSASKAGSSPSL. The Protein kinase domain maps to 571–832; it reads FCPKDVLGHG…AKHVLKHPFF (262 aa). ATP-binding positions include 577–585, K599, and 643–645; these read LGHGAEGTI and ELC. Residue D688 is the Proton acceptor of the active site. ATP-binding positions include 690-693 and D711; that span reads KPHN. Phosphoserine is present on residues S724 and S729. In terms of domain architecture, KEN spans 835-963; the sequence is LEKQLQFFQD…ERLFQPYYFH (129 aa). Residues 906 to 907 are interacts with hydroxy-aryl-aldehyde inhibitors; it reads NK. The residue at position 973 (T973) is a Phosphothreonine.

It belongs to the protein kinase superfamily. Ser/Thr protein kinase family. As to quaternary structure, monomer. Homodimer; disulfide-linked; homodimerization takes place in response to endoplasmic reticulum stress and promotes activation of the kinase and endoribonuclease activities. Dimer formation is driven by hydrophobic interactions within the N-terminal luminal domains and stabilized by disulfide bridges. Interacts (via the luminal region) with DNAJB9/ERdj4; interaction takes place in unstressed cells and promotes recruitment of HSPA5/BiP. Interacts (via the luminal region) with HSPA5/BiP; HSPA5/BiP is a negative regulator of the unfolded protein response (UPR) that prevents homodimerization of ERN1/IRE1 and subsequent activation of the protein. Interaction with HSPA5 also competitively inhibits ERN1 interaction with MANF. Interacts with PDIA6, a negative regulator of the UPR; the interaction is direct and disrupts homodimerization. Interacts with DAB2IP (via PH domain); the interaction occurs in a endoplasmic reticulum stress-induced dependent manner and is required for subsequent recruitment of TRAF2 to ERN1/IRE1. Interacts with TAOK3 and TRAF2. Interacts with RNF13. Interacts with LACC1. Interacts (when unphosphorylated) with DDRGK1; interaction is dependent on UFM1 and takes place in response to endoplasmic reticulum stress, regulating ERN1/IRE1-alpha stability. Interacts (via N-terminus) with P4HB/PDIA1; the interaction is enhanced by phosphorylation of P4HB by FAM20C in response to endoplasmic reticulum stress and results in attenuation of ERN1 activity. Interacts with TMBIM6; this interaction inhibits ERN1 activity. Interacts (via luminal domain) with MANF (via C-terminus); the interaction is decreased in the presence of increasing concentrations of Ca(2+). Mg(2+) is required as a cofactor. Autophosphorylated following homodimerization. Autophosphorylation promotes activation of the endoribonuclease domain. In response to ER stress, phosphorylated at Ser-724, Ser-729 and possibly Ser-726; phosphorylation promotes oligomerization and endoribonuclease activity. Dephosphorylated at Ser-724, Ser-729 and possibly Ser-726 by RPAP2 to abort failed ER-stress adaptation and trigger apoptosis. Phosphorylated at Ser-724; in response to the ER stressor tunicamycin. Post-translationally, ADP-ribosylated by PARP16 upon ER stress, which increases both kinase and endonuclease activities. As to expression, ubiquitously expressed. High levels observed in pancreatic tissue.

Its subcellular location is the endoplasmic reticulum membrane. It catalyses the reaction L-seryl-[protein] + ATP = O-phospho-L-seryl-[protein] + ADP + H(+). The catalysed reaction is L-threonyl-[protein] + ATP = O-phospho-L-threonyl-[protein] + ADP + H(+). The kinase domain is activated by trans-autophosphorylation following homodimerization. Kinase activity is required for activation of the endoribonuclease domain. Endoribonuclease activity is specifically inhibited by hydroxy-aryl-aldehydes (HAA). Serine/threonine-protein kinase and endoribonuclease that acts as a key sensor for the endoplasmic reticulum unfolded protein response (UPR). In unstressed cells, the endoplasmic reticulum luminal domain is maintained in its inactive monomeric state by binding to the endoplasmic reticulum chaperone HSPA5/BiP. Accumulation of misfolded proteins in the endoplasmic reticulum causes release of HSPA5/BiP, allowing the luminal domain to homodimerize, promoting autophosphorylation of the kinase domain and subsequent activation of the endoribonuclease activity. The endoribonuclease activity is specific for XBP1 mRNA and excises 26 nucleotides from XBP1 mRNA. The resulting spliced transcript of XBP1 encodes a transcriptional activator protein that up-regulates expression of UPR target genes. Acts as an upstream signal for ER stress-induced GORASP2-mediated unconventional (ER/Golgi-independent) trafficking of CFTR to cell membrane by modulating the expression and localization of SEC16A. The polypeptide is Serine/threonine-protein kinase/endoribonuclease IRE1 (Homo sapiens (Human)).